We begin with the raw amino-acid sequence, 131 residues long: D-ribose pyranase (131 aa).

The active-site Proton donor is histidine 20. Substrate is bound by residues aspartate 28, histidine 98, and 120–122 (YAN).

The protein belongs to the RbsD / FucU family. RbsD subfamily. As to quaternary structure, homodecamer.

The protein resides in the cytoplasm. The catalysed reaction is beta-D-ribopyranose = beta-D-ribofuranose. The protein operates within carbohydrate metabolism; D-ribose degradation; D-ribose 5-phosphate from beta-D-ribopyranose: step 1/2. Its function is as follows. Catalyzes the interconversion of beta-pyran and beta-furan forms of D-ribose. The sequence is that of D-ribose pyranase from Clostridium perfringens (strain ATCC 13124 / DSM 756 / JCM 1290 / NCIMB 6125 / NCTC 8237 / Type A).